We begin with the raw amino-acid sequence, 137 residues long: Ribosome-binding factor A (137 aa).

Belongs to the RbfA family. Monomer. Binds 30S ribosomal subunits, but not 50S ribosomal subunits or 70S ribosomes.

Its subcellular location is the cytoplasm. In terms of biological role, one of several proteins that assist in the late maturation steps of the functional core of the 30S ribosomal subunit. Associates with free 30S ribosomal subunits (but not with 30S subunits that are part of 70S ribosomes or polysomes). Required for efficient processing of 16S rRNA. May interact with the 5'-terminal helix region of 16S rRNA. The protein is Ribosome-binding factor A of Nitrobacter hamburgensis (strain DSM 10229 / NCIMB 13809 / X14).